Reading from the N-terminus, the 97-residue chain is Co-chaperonin GroES (97 aa).

Belongs to the GroES chaperonin family. Heptamer of 7 subunits arranged in a ring. Interacts with the chaperonin GroEL.

Its subcellular location is the cytoplasm. In terms of biological role, together with the chaperonin GroEL, plays an essential role in assisting protein folding. The GroEL-GroES system forms a nano-cage that allows encapsulation of the non-native substrate proteins and provides a physical environment optimized to promote and accelerate protein folding. GroES binds to the apical surface of the GroEL ring, thereby capping the opening of the GroEL channel. In Pseudomonas fluorescens (strain Pf0-1), this protein is Co-chaperonin GroES.